The primary structure comprises 600 residues: Methionine--tRNA ligase (600 aa).

A 'HIGH' region motif is present at residues 11–21 (PYANGPRHIGH). Zn(2+) contacts are provided by C143, C146, C156, and C159. A 'KMSKS' region motif is present at residues 351–355 (KFSSS). Position 354 (S354) interacts with ATP.

It belongs to the class-I aminoacyl-tRNA synthetase family. MetG type 1 subfamily. Monomer. Requires Zn(2+) as cofactor.

It localises to the cytoplasm. It carries out the reaction tRNA(Met) + L-methionine + ATP = L-methionyl-tRNA(Met) + AMP + diphosphate. Its function is as follows. Is required not only for elongation of protein synthesis but also for the initiation of all mRNA translation through initiator tRNA(fMet) aminoacylation. This is Methionine--tRNA ligase from Salinispora arenicola (strain CNS-205).